The primary structure comprises 57 residues: Sperm protamine P1-type (57 aa).

Positions 1–57 are disordered; that stretch reads MARYRHNRSRSRSRHRRRRRGHRGGRYRRRRRRGRYGHRRHHRGHSRRRRKRRRSRH.

The protein belongs to the protamine P1 family. In terms of tissue distribution, testis.

It is found in the nucleus. The protein localises to the chromosome. In terms of biological role, protamines substitute for histones in the chromatin of sperm during the haploid phase of spermatogenesis. They compact sperm DNA into a highly condensed, stable and inactive complex. The sequence is that of Sperm protamine P1-type from Alligator mississippiensis (American alligator).